A 218-amino-acid polypeptide reads, in one-letter code: Ribose-5-phosphate isomerase A (218 aa).

Substrate contacts are provided by residues 28 to 31 (TGST), 81 to 84 (DGAD), and 94 to 97 (KGGG). Glutamate 103 acts as the Proton acceptor in catalysis. Lysine 121 is a binding site for substrate.

The protein belongs to the ribose 5-phosphate isomerase family. In terms of assembly, homodimer.

It carries out the reaction aldehydo-D-ribose 5-phosphate = D-ribulose 5-phosphate. The protein operates within carbohydrate degradation; pentose phosphate pathway; D-ribose 5-phosphate from D-ribulose 5-phosphate (non-oxidative stage): step 1/1. Functionally, catalyzes the reversible conversion of ribose-5-phosphate to ribulose 5-phosphate. This Thioalkalivibrio sulfidiphilus (strain HL-EbGR7) protein is Ribose-5-phosphate isomerase A.